The primary structure comprises 882 residues: Valine--tRNA ligase (882 aa).

The 'HIGH' region signature appears at 45–55 (PNVTGKLHLGH). The 'KMSKS' region signature appears at 519–523 (KMSKS). Lysine 522 lines the ATP pocket. Positions 808–882 (LADLLNVEEE…RIAEMQKLVK (75 aa)) form a coiled coil.

The protein belongs to the class-I aminoacyl-tRNA synthetase family. ValS type 1 subfamily. Monomer.

The protein resides in the cytoplasm. It carries out the reaction tRNA(Val) + L-valine + ATP = L-valyl-tRNA(Val) + AMP + diphosphate. Catalyzes the attachment of valine to tRNA(Val). As ValRS can inadvertently accommodate and process structurally similar amino acids such as threonine, to avoid such errors, it has a 'posttransfer' editing activity that hydrolyzes mischarged Thr-tRNA(Val) in a tRNA-dependent manner. The sequence is that of Valine--tRNA ligase from Streptococcus pyogenes serotype M3 (strain ATCC BAA-595 / MGAS315).